The primary structure comprises 817 residues: tRNA(Met) cytidine acetyltransferase TmcA (817 aa).

ATP-binding positions include glutamine 265, 289-298 (GRGKSVSVGI), and arginine 439. Residues 469-664 (ELIRKMEVYL…YTAIVIKPIS (196 aa)) form the N-acetyltransferase domain. Acetyl-CoA contacts are provided by residues 589-591 (IAT), 596-602 (MDLGLGS), glutamate 629, and arginine 636.

It belongs to the RNA cytidine acetyltransferase family. TmcA subfamily.

The protein resides in the cytoplasm. It catalyses the reaction cytidine(34) in elongator tRNA(Met) + acetyl-CoA + ATP + H2O = N(4)-acetylcytidine(34) in elongator tRNA(Met) + ADP + phosphate + CoA + H(+). The catalysed reaction is a cytidine in RNA + acetyl-CoA + ATP + H2O = an N(4)-acetylcytidine in RNA + ADP + phosphate + CoA + H(+). It carries out the reaction a cytidine in tRNA + acetyl-CoA + ATP + H2O = an N(4)-acetylcytidine in tRNA + ADP + phosphate + CoA + H(+). The enzyme catalyses a cytidine in mRNA + acetyl-CoA + ATP + H2O = an N(4)-acetylcytidine in mRNA + ADP + phosphate + CoA + H(+). Catalyzes the formation of N(4)-acetylcytidine (ac(4)C) at the wobble position of tRNA(Met), by using acetyl-CoA as an acetyl donor and ATP (or GTP). Functionally, catalyzes the formation of N(4)-acetylcytidine (ac(4)C) sites in rRNA, tRNA, mRNA and non-coding (nc) RNA, almost always on the middle C of a CCG motif. In hyperthermophiles more acetylation is seen at higher temperatures. In Pyrococcus abyssi (strain GE5 / Orsay), this protein is tRNA(Met) cytidine acetyltransferase TmcA.